A 95-amino-acid chain; its full sequence is Turripeptide OL184 (95 aa).

Contains 5 disulfide bonds. As to expression, expressed by the venom duct.

It localises to the secreted. Functionally, acts as a neurotoxin by inhibiting an ion channel. The protein is Turripeptide OL184 of Iotyrris olangoensis (Sea snail).